A 416-amino-acid polypeptide reads, in one-letter code: UDP-N-acetylglucosamine 1-carboxyvinyltransferase (416 aa).

22–23 (KN) provides a ligand contact to phosphoenolpyruvate. UDP-N-acetyl-alpha-D-glucosamine is bound at residue arginine 92. Catalysis depends on cysteine 116, which acts as the Proton donor. Cysteine 116 carries the post-translational modification 2-(S-cysteinyl)pyruvic acid O-phosphothioketal. Residues 121–125 (RPVDQ), aspartate 304, and isoleucine 326 contribute to the UDP-N-acetyl-alpha-D-glucosamine site.

The protein belongs to the EPSP synthase family. MurA subfamily.

The protein localises to the cytoplasm. The catalysed reaction is phosphoenolpyruvate + UDP-N-acetyl-alpha-D-glucosamine = UDP-N-acetyl-3-O-(1-carboxyvinyl)-alpha-D-glucosamine + phosphate. It participates in cell wall biogenesis; peptidoglycan biosynthesis. Its function is as follows. Cell wall formation. Adds enolpyruvyl to UDP-N-acetylglucosamine. The polypeptide is UDP-N-acetylglucosamine 1-carboxyvinyltransferase (Cupriavidus taiwanensis (strain DSM 17343 / BCRC 17206 / CCUG 44338 / CIP 107171 / LMG 19424 / R1) (Ralstonia taiwanensis (strain LMG 19424))).